The chain runs to 192 residues: Small ribosomal subunit protein uS4B (192 aa).

A phosphoserine mark is found at S89 and S179. An S4 RNA-binding domain is found at R107 to Q181. A disordered region spans residues G166–E192.

It belongs to the universal ribosomal protein uS4 family. As to quaternary structure, component of the small ribosomal subunit (SSU). Mature yeast ribosomes consist of a small (40S) and a large (60S) subunit. The 40S small subunit contains 1 molecule of ribosomal RNA (18S rRNA) and at least 33 different proteins. The large 60S subunit contains 3 rRNA molecules (25S, 5.8S and 5S rRNA) and at least 46 different proteins. Interacts with snoRNA U3. uS11 interacts with MPP10. Component of the ribosomal small subunit (SSU) processome composed of at least 40 protein subunits and snoRNA U3.

The protein localises to the cytoplasm. Functionally, component of the ribosome, a large ribonucleoprotein complex responsible for the synthesis of proteins in the cell. The small ribosomal subunit (SSU) binds messenger RNAs (mRNAs) and translates the encoded message by selecting cognate aminoacyl-transfer RNA (tRNA) molecules. The large subunit (LSU) contains the ribosomal catalytic site termed the peptidyl transferase center (PTC), which catalyzes the formation of peptide bonds, thereby polymerizing the amino acids delivered by tRNAs into a polypeptide chain. The nascent polypeptides leave the ribosome through a tunnel in the LSU and interact with protein factors that function in enzymatic processing, targeting, and the membrane insertion of nascent chains at the exit of the ribosomal tunnel. uS4 is involved in nucleolar processing of pre-18S ribosomal RNA and ribosome assembly. This chain is Small ribosomal subunit protein uS4B (rps902), found in Schizosaccharomyces pombe (strain 972 / ATCC 24843) (Fission yeast).